Reading from the N-terminus, the 443-residue chain is Oxygen-dependent coproporphyrinogen-III oxidase, mitochondrial (443 aa).

Residues 1–98 (MALRLGQLGS…EMVPKSSGAR (98 aa)) constitute a mitochondrion transit peptide. The disordered stretch occupies residues 90-111 (MVPKSSGARSPSPGRLEEDGDE). Ser101 carries the phosphoserine modification. The important for dimerization stretch occupies residues 182–191 (VLQDGRVFEK). Residue Ser233 coordinates coproporphyrinogen III. His247 acts as the Proton donor in catalysis. Position 249–251 (249–251 (NYR)) interacts with coproporphyrinogen III. The interval 381–417 (YVEFNLVYDRGTKFGLFTPGSRIESILMSLPLTARWE) is important for dimerization. Position 393 is an N6-acetyllysine; alternate (Lys393). An N6-succinyllysine; alternate modification is found at Lys393. Coproporphyrinogen III is bound at residue 400-402 (GSR).

Belongs to the aerobic coproporphyrinogen-III oxidase family. Homodimer.

The protein resides in the mitochondrion intermembrane space. It catalyses the reaction coproporphyrinogen III + O2 + 2 H(+) = protoporphyrinogen IX + 2 CO2 + 2 H2O. It functions in the pathway porphyrin-containing compound metabolism; protoporphyrin-IX biosynthesis; protoporphyrinogen-IX from coproporphyrinogen-III (O2 route): step 1/1. Functionally, involved in the heme biosynthesis. Catalyzes the aerobic oxidative decarboxylation of propionate groups of rings A and B of coproporphyrinogen-III to yield the vinyl groups in protoporphyrinogen-IX. The polypeptide is Oxygen-dependent coproporphyrinogen-III oxidase, mitochondrial (Rattus norvegicus (Rat)).